We begin with the raw amino-acid sequence, 807 residues long: Glycerol-3-phosphate acyltransferase (807 aa).

The HXXXXD motif signature appears at 305–310; sequence CHRSHM.

Belongs to the GPAT/DAPAT family.

Its subcellular location is the cell inner membrane. It catalyses the reaction sn-glycerol 3-phosphate + an acyl-CoA = a 1-acyl-sn-glycero-3-phosphate + CoA. The protein operates within phospholipid metabolism; CDP-diacylglycerol biosynthesis; CDP-diacylglycerol from sn-glycerol 3-phosphate: step 1/3. The sequence is that of Glycerol-3-phosphate acyltransferase from Klebsiella pneumoniae subsp. pneumoniae (strain ATCC 700721 / MGH 78578).